Reading from the N-terminus, the 174-residue chain is Large ribosomal subunit protein uL10 (174 aa).

It belongs to the universal ribosomal protein uL10 family. Part of the ribosomal stalk of the 50S ribosomal subunit. The N-terminus interacts with L11 and the large rRNA to form the base of the stalk. The C-terminus forms an elongated spine to which L12 dimers bind in a sequential fashion forming a multimeric L10(L12)X complex.

Functionally, forms part of the ribosomal stalk, playing a central role in the interaction of the ribosome with GTP-bound translation factors. This is Large ribosomal subunit protein uL10 from Bordetella petrii (strain ATCC BAA-461 / DSM 12804 / CCUG 43448).